Here is a 453-residue protein sequence, read N- to C-terminus: Ubiquitin-associated protein 1 (453 aa).

Residues 19 to 65 form the UMA domain; that stretch reads LDDVPFKLNEKFRCPSKVGLPIGFCLSDCNAILSDLQYDFNLERRTV. Residues 83 to 93 are compositionally biased toward basic and acidic residues; that stretch reads EAIRTDSESER. Disordered stretches follow at residues 83 to 119, 189 to 223, and 260 to 335; these read EAIR…QDIV, LQSQ…AKTG, and FPKL…AGTT. Residues 189–199 show a composition bias toward low complexity; sequence LQSQPQSSVSP. Over residues 285–328 the composition is skewed to polar residues; sequence NLSNGTPPSLQRTASNNNTTLPQEQPVFAQNGTPKQSNPVTVTS. 2 UBA domains span residues 340-381 and 403-449; these read SPSE…LFTH and GSEE…LMTR.

Component of an ESCRT-I complex (endosomal sorting complex required for transport I).

It is found in the cytoplasm. The protein localises to the cytosol. Its subcellular location is the endosome. Component of the ESCRT-I complex, a regulator of vesicular trafficking process. Binds to ubiquitinated cargo proteins and is required for the sorting of endocytic ubiquitinated cargos into multivesicular bodies (MVBs). This Danio rerio (Zebrafish) protein is Ubiquitin-associated protein 1.